A 933-amino-acid polypeptide reads, in one-letter code: Dual 3',5'-cyclic-AMP and -GMP phosphodiesterase 11A (933 aa).

Residues 42 to 125 (HSQGQGALGP…ASQKELRKSF (84 aa)) are disordered. Phosphoserine is present on residues Ser-162, Ser-163, and Ser-239. 2 consecutive GAF domains span residues 217–370 (DLTS…GIAI) and 402–558 (DLEK…GLGI). Residue Ser-424 coordinates 3',5'-cyclic GMP. The 325-residue stretch at 588–912 (SKAEVDKFKA…SKWEELHQKR (325 aa)) folds into the PDEase domain. His-664 (proton donor) is an active-site residue. The a divalent metal cation site is built by His-668, His-704, Asp-705, and Asp-816.

This sequence belongs to the cyclic nucleotide phosphodiesterase family. The cofactor is a divalent metal cation. As to expression, isoform 1 is present in prostate, pituitary, heart and liver. It is however not present in testis nor in penis, suggesting that weak inhibition by Tadalafil (Cialis) is not relevant (at protein level). Isoform 2 may be expressed in testis. Isoform 4 is expressed in adrenal cortex.

The protein resides in the cytoplasm. It is found in the cytosol. It carries out the reaction 3',5'-cyclic GMP + H2O = GMP + H(+). The catalysed reaction is 3',5'-cyclic AMP + H2O = AMP + H(+). Inhibited by 3-isobutyl-1-methylxanthine (IBMX), zaprinast and dipyridamole. cGMP acts as an allosteric activator. Weakly inhibited by Sildenafil (Viagra) and Tadalafil (Cialis); however, the fact that the protein is probably absent from testis, suggests that it is not biologically relevant and is not related with erectile dysfunction. Functionally, plays a role in signal transduction by regulating the intracellular concentration of cyclic nucleotides cAMP and cGMP. Catalyzes the hydrolysis of both cAMP and cGMP to 5'-AMP and 5'-GMP, respectively. The chain is Dual 3',5'-cyclic-AMP and -GMP phosphodiesterase 11A from Homo sapiens (Human).